The chain runs to 272 residues: Digeranylgeranylglyceryl phosphate synthase (272 aa).

The next 8 helical transmembrane spans lie at 16–36 (AFIA…EIIL), 79–99 (ALYY…IISL), 100–120 (ENGI…YDLK), 124–144 (FIGN…GGLI), 148–168 (VNLG…REII), 194–214 (AVML…LLYY), 217–237 (IFSI…VYSA), and 252–272 (ISKY…MGAL).

It belongs to the UbiA prenyltransferase family. DGGGP synthase subfamily. Requires Mg(2+) as cofactor.

The protein localises to the cell membrane. The catalysed reaction is sn-3-O-(geranylgeranyl)glycerol 1-phosphate + (2E,6E,10E)-geranylgeranyl diphosphate = 2,3-bis-O-(geranylgeranyl)-sn-glycerol 1-phosphate + diphosphate. Its pathway is membrane lipid metabolism; glycerophospholipid metabolism. In terms of biological role, prenyltransferase that catalyzes the transfer of the geranylgeranyl moiety of geranylgeranyl diphosphate (GGPP) to the C2 hydroxyl of (S)-3-O-geranylgeranylglyceryl phosphate (GGGP). This reaction is the second ether-bond-formation step in the biosynthesis of archaeal membrane lipids. The protein is Digeranylgeranylglyceryl phosphate synthase of Methanosphaera stadtmanae (strain ATCC 43021 / DSM 3091 / JCM 11832 / MCB-3).